Here is a 307-residue protein sequence, read N- to C-terminus: UDP-3-O-acyl-N-acetylglucosamine deacetylase (307 aa).

The Zn(2+) site is built by H78, H235, and D239. H262 functions as the Proton donor in the catalytic mechanism.

This sequence belongs to the LpxC family. Zn(2+) is required as a cofactor.

The catalysed reaction is a UDP-3-O-[(3R)-3-hydroxyacyl]-N-acetyl-alpha-D-glucosamine + H2O = a UDP-3-O-[(3R)-3-hydroxyacyl]-alpha-D-glucosamine + acetate. It participates in glycolipid biosynthesis; lipid IV(A) biosynthesis; lipid IV(A) from (3R)-3-hydroxytetradecanoyl-[acyl-carrier-protein] and UDP-N-acetyl-alpha-D-glucosamine: step 2/6. Its function is as follows. Catalyzes the hydrolysis of UDP-3-O-myristoyl-N-acetylglucosamine to form UDP-3-O-myristoylglucosamine and acetate, the committed step in lipid A biosynthesis. This chain is UDP-3-O-acyl-N-acetylglucosamine deacetylase, found in Geotalea uraniireducens (strain Rf4) (Geobacter uraniireducens).